A 241-amino-acid chain; its full sequence is 2-C-methyl-D-erythritol 4-phosphate cytidylyltransferase (241 aa).

This sequence belongs to the IspD/TarI cytidylyltransferase family. IspD subfamily.

The catalysed reaction is 2-C-methyl-D-erythritol 4-phosphate + CTP + H(+) = 4-CDP-2-C-methyl-D-erythritol + diphosphate. The protein operates within isoprenoid biosynthesis; isopentenyl diphosphate biosynthesis via DXP pathway; isopentenyl diphosphate from 1-deoxy-D-xylulose 5-phosphate: step 2/6. In terms of biological role, catalyzes the formation of 4-diphosphocytidyl-2-C-methyl-D-erythritol from CTP and 2-C-methyl-D-erythritol 4-phosphate (MEP). This chain is 2-C-methyl-D-erythritol 4-phosphate cytidylyltransferase, found in Alkaliphilus metalliredigens (strain QYMF).